A 488-amino-acid polypeptide reads, in one-letter code: ATP synthase subunit beta (488 aa).

Position 164 to 171 (164 to 171 (GGAGMGKT)) interacts with ATP.

The protein belongs to the ATPase alpha/beta chains family. As to quaternary structure, F-type ATPases have 2 components, CF(1) - the catalytic core - and CF(0) - the membrane proton channel. CF(1) has five subunits: alpha(3), beta(3), gamma(1), delta(1), epsilon(1). CF(0) has four main subunits: a(1), b(1), b'(1) and c(9-12).

Its subcellular location is the cellular thylakoid membrane. The catalysed reaction is ATP + H2O + 4 H(+)(in) = ADP + phosphate + 5 H(+)(out). Its function is as follows. Produces ATP from ADP in the presence of a proton gradient across the membrane. The catalytic sites are hosted primarily by the beta subunits. The chain is ATP synthase subunit beta from Synechococcus sp. (strain RCC307).